The chain runs to 366 residues: tRNA/tmRNA (uracil-C(5))-methyltransferase (366 aa).

Q190, Y218, N223, E239, and D299 together coordinate S-adenosyl-L-methionine. The active-site Nucleophile is C324. E358 functions as the Proton acceptor in the catalytic mechanism.

This sequence belongs to the class I-like SAM-binding methyltransferase superfamily. RNA M5U methyltransferase family. TrmA subfamily.

It carries out the reaction uridine(54) in tRNA + S-adenosyl-L-methionine = 5-methyluridine(54) in tRNA + S-adenosyl-L-homocysteine + H(+). It catalyses the reaction uridine(341) in tmRNA + S-adenosyl-L-methionine = 5-methyluridine(341) in tmRNA + S-adenosyl-L-homocysteine + H(+). Its function is as follows. Dual-specificity methyltransferase that catalyzes the formation of 5-methyluridine at position 54 (m5U54) in all tRNAs, and that of position 341 (m5U341) in tmRNA (transfer-mRNA). This chain is tRNA/tmRNA (uracil-C(5))-methyltransferase, found in Escherichia coli O157:H7.